Here is a 333-residue protein sequence, read N- to C-terminus: Adenosine deaminase (333 aa).

Zn(2+) is bound by residues His12 and His14. The substrate site is built by His14, Asp16, and Gly170. His197 provides a ligand contact to Zn(2+). The active-site Proton donor is the Glu200. Asp278 is a binding site for Zn(2+). Residue Asp279 coordinates substrate.

The protein belongs to the metallo-dependent hydrolases superfamily. Adenosine and AMP deaminases family. Adenosine deaminase subfamily. Zn(2+) serves as cofactor.

The catalysed reaction is adenosine + H2O + H(+) = inosine + NH4(+). The enzyme catalyses 2'-deoxyadenosine + H2O + H(+) = 2'-deoxyinosine + NH4(+). In terms of biological role, catalyzes the hydrolytic deamination of adenosine and 2-deoxyadenosine. This chain is Adenosine deaminase, found in Aliivibrio fischeri (strain ATCC 700601 / ES114) (Vibrio fischeri).